The chain runs to 312 residues: UDP-N-acetylenolpyruvoylglucosamine reductase (312 aa).

The region spanning 30-202 (RVGGPAQWLA…VAAQFQLEPG (173 aa)) is the FAD-binding PCMH-type domain. Arg-181 is a catalytic residue. Residue Ser-232 is the Proton donor of the active site. Residue Glu-302 is part of the active site.

This sequence belongs to the MurB family. Requires FAD as cofactor.

The protein resides in the cytoplasm. The catalysed reaction is UDP-N-acetyl-alpha-D-muramate + NADP(+) = UDP-N-acetyl-3-O-(1-carboxyvinyl)-alpha-D-glucosamine + NADPH + H(+). The protein operates within cell wall biogenesis; peptidoglycan biosynthesis. Cell wall formation. The chain is UDP-N-acetylenolpyruvoylglucosamine reductase from Synechococcus sp. (strain CC9311).